The following is a 35-amino-acid chain: uncharacterized protein (35 aa).

The first 18 residues, 1 to 18 (MRSLVFVQLSLLSWEIFC), serve as a signal peptide directing secretion.

This is an uncharacterized protein from Saccharomyces cerevisiae (strain ATCC 204508 / S288c) (Baker's yeast).